The following is a 112-amino-acid chain: MLDEKSSNTTSVVVLCTAPDEATAQDLAAKVLAEKLAACATLIPGATSLYYWEGKLEQEYEVQMILKTTVSHQQAMLECLKSHHPYQTPELLVLPVTHGDTDYLSWLNASLR.

3 residues coordinate Cu cation: Cys-16, His-83, and His-84.

It belongs to the CutA family. In terms of assembly, homotrimer. It depends on Cu cation as a cofactor.

Its subcellular location is the cytoplasm. In terms of biological role, involved in resistance toward heavy metals. The chain is Divalent-cation tolerance protein CutA from Escherichia coli O81 (strain ED1a).